Here is a 432-residue protein sequence, read N- to C-terminus: Bifunctional protein GlmU (432 aa).

Residues 1–224 form a pyrophosphorylase region; it reads MSEISVIILA…EENFMGINDK (224 aa). UDP-N-acetyl-alpha-D-glucosamine is bound by residues 9–12, lysine 23, and 82–83; these read LAAG and GT. Aspartate 103 contributes to the Mg(2+) binding site. UDP-N-acetyl-alpha-D-glucosamine-binding residues include glycine 136, glutamate 150, asparagine 165, and asparagine 222. Asparagine 222 contacts Mg(2+). Residues 225-245 form a linker region; that stretch reads FALSKAETIIQNEIKENLMKN. Residues 246-432 form an N-acetyltransferase region; it reads GVLMRLPESI…FFAKFFKEIK (187 aa). Arginine 309 and lysine 326 together coordinate UDP-N-acetyl-alpha-D-glucosamine. The active-site Proton acceptor is the histidine 337. UDP-N-acetyl-alpha-D-glucosamine-binding residues include tyrosine 340 and asparagine 351. Acetyl-CoA contacts are provided by residues 360–361, serine 379, alanine 397, and arginine 414; that span reads NY.

This sequence in the N-terminal section; belongs to the N-acetylglucosamine-1-phosphate uridyltransferase family. In the C-terminal section; belongs to the transferase hexapeptide repeat family. In terms of assembly, homotrimer. Mg(2+) serves as cofactor.

Its subcellular location is the cytoplasm. It carries out the reaction alpha-D-glucosamine 1-phosphate + acetyl-CoA = N-acetyl-alpha-D-glucosamine 1-phosphate + CoA + H(+). The catalysed reaction is N-acetyl-alpha-D-glucosamine 1-phosphate + UTP + H(+) = UDP-N-acetyl-alpha-D-glucosamine + diphosphate. It functions in the pathway nucleotide-sugar biosynthesis; UDP-N-acetyl-alpha-D-glucosamine biosynthesis; N-acetyl-alpha-D-glucosamine 1-phosphate from alpha-D-glucosamine 6-phosphate (route II): step 2/2. It participates in nucleotide-sugar biosynthesis; UDP-N-acetyl-alpha-D-glucosamine biosynthesis; UDP-N-acetyl-alpha-D-glucosamine from N-acetyl-alpha-D-glucosamine 1-phosphate: step 1/1. The protein operates within bacterial outer membrane biogenesis; LPS lipid A biosynthesis. Its function is as follows. Catalyzes the last two sequential reactions in the de novo biosynthetic pathway for UDP-N-acetylglucosamine (UDP-GlcNAc). The C-terminal domain catalyzes the transfer of acetyl group from acetyl coenzyme A to glucosamine-1-phosphate (GlcN-1-P) to produce N-acetylglucosamine-1-phosphate (GlcNAc-1-P), which is converted into UDP-GlcNAc by the transfer of uridine 5-monophosphate (from uridine 5-triphosphate), a reaction catalyzed by the N-terminal domain. This chain is Bifunctional protein GlmU, found in Campylobacter hominis (strain ATCC BAA-381 / DSM 21671 / CCUG 45161 / LMG 19568 / NCTC 13146 / CH001A).